We begin with the raw amino-acid sequence, 35 residues long: Photosystem II reaction center protein Psb30 (35 aa).

The chain crosses the membrane as a helical span at residues 7-27; that stretch reads VFVQLALLALIVLAGPAVILL.

It belongs to the Psb30/Ycf12 family. PSII is composed of 1 copy each of membrane proteins PsbA, PsbB, PsbC, PsbD, PsbE, PsbF, PsbH, PsbI, PsbJ, PsbK, PsbL, PsbM, PsbT, PsbX, PsbY, PsbZ, Psb30/Ycf12, peripheral proteins PsbO, CyanoQ (PsbQ), PsbU, PsbV and a large number of cofactors. It forms dimeric complexes.

It is found in the cellular thylakoid membrane. A core subunit of photosystem II (PSII), probably helps stabilize the reaction center. This Synechococcus sp. (strain JA-2-3B'a(2-13)) (Cyanobacteria bacterium Yellowstone B-Prime) protein is Photosystem II reaction center protein Psb30.